The chain runs to 85 residues: RNA-binding protein Hfq (85 aa).

The 60-residue stretch at 9–68 folds into the Sm domain; that stretch reads DPFLNALRRERIPVSIYLVNGIKLQGQVESFDQFVILLKNTVSQMVYKHAISTVVPARPV.

This sequence belongs to the Hfq family. As to quaternary structure, homohexamer.

RNA chaperone that binds small regulatory RNA (sRNAs) and mRNAs to facilitate mRNA translational regulation in response to envelope stress, environmental stress and changes in metabolite concentrations. Also binds with high specificity to tRNAs. The sequence is that of RNA-binding protein Hfq from Tolumonas auensis (strain DSM 9187 / NBRC 110442 / TA 4).